Reading from the N-terminus, the 85-residue chain is Large ribosomal subunit protein bL31 (85 aa).

The segment at 64-85 (KYGMSESQGAGGKGNAKKKDEK) is disordered.

The protein belongs to the bacterial ribosomal protein bL31 family. Type A subfamily. In terms of assembly, part of the 50S ribosomal subunit.

Binds the 23S rRNA. This is Large ribosomal subunit protein bL31 from Acaryochloris marina (strain MBIC 11017).